We begin with the raw amino-acid sequence, 451 residues long: MGGEERSGDGEKRGEEVVDAGSLFVLKSKGTWWHCGFHLTTSIVAPALLSLPYAFKFLGWAAGISCLVGGAAVTFYSYTLLSLTLEHHASLGNRYLRFRDMAHHILSPKWGRYYVGPIQMAVCYGVVIANALLGGQCLKAMYLVVQPNGEMKLFEFVIIFGCLLLVLAQFPSFHSLRYINSLSLLLCLLYSASAAAASIYIGKEPNAPEKDYTIVGDPETRVFGIFNAMAIIATTYGNGIIPEIQATISAPVKGKMMKGLCMCYLVVIMTFFTVAITGYWAFGKKANGLIFTNFLNAETNHYFVPTWFIFLVNLFTVLQLSAVAVVYLQPINDILESVISDPTKKEFSIRNVIPRLVVRSLFVVMATIVAAMLPFFGDVNSLLGAFGFIPLDFVLPVVFFNFTFKPSKKSFIFWINTVIAVVFSCLGVIAMVAAVRQIIIDANTYKLFADV.

Helical transmembrane passes span 35 to 55, 57 to 77, 115 to 135, 153 to 173, 182 to 202, 222 to 242, 262 to 282, 308 to 328, 356 to 376, 382 to 402, and 411 to 431; these read CGFHLTTSIVAPALLSLPYAF, FLGWAAGISCLVGGAAVTFYS, VGPIQMAVCYGVVIANALLGG, LFEFVIIFGCLLLVLAQFPSF, LSLLLCLLYSASAAAASIYIG, VFGIFNAMAIIATTYGNGIIP, MCYLVVIMTFFTVAITGYWAF, FIFLVNLFTVLQLSAVAVVYL, LVVRSLFVVMATIVAAMLPFF, LLGAFGFIPLDFVLPVVFFNF, and FIFWINTVIAVVFSCLGVIAM.

It belongs to the amino acid/polyamine transporter 2 family. Amino acid/auxin permease (AAAP) (TC 2.A.18.2) subfamily. In terms of tissue distribution, highly expressed in flowers and at lower levels in roots, leaves and stems.

The protein resides in the cell membrane. Functionally, high affinity gamma-aminobutyric acid (GABA) transporter probably involved in GABA uptake into cells. When expressed in a heterologous system (Xenopus oocytes), imports GABA, butylamine, beta- and L-Alanine, 5-aminovaleric acid, 6-aminocaproic acid and 8-aminocaprylic acid, but does not mediate the transport of proline or glycine betaine. This Arabidopsis thaliana (Mouse-ear cress) protein is GABA transporter 1 (GAT1).